A 30-amino-acid chain; its full sequence is Cycloviolin-D (30 aa).

The cyclopeptide (Gly-Asn) cross-link spans 1–30 (GFPCGESCVFIPCISAAIGCSCKNKVCYRN). 3 cysteine pairs are disulfide-bonded: C4/C20, C8/C22, and C13/C27.

This is a cyclic peptide.

Its function is as follows. Probably participates in a plant defense mechanism. Has anti-HIV activity. This chain is Cycloviolin-D, found in Leonia cymosa (Sacha uba).